A 369-amino-acid chain; its full sequence is Chaperone protein DnaJ (369 aa).

The J domain occupies 7–73; that stretch reads DYYEILGVPR…QKRAMYDRFG (67 aa). The CR-type zinc finger occupies 143–225; it reads GAEIPVEYER…CGGSGRVLRK (83 aa). 8 residues coordinate Zn(2+): cysteine 156, cysteine 159, cysteine 173, cysteine 176, cysteine 199, cysteine 202, cysteine 213, and cysteine 216. CXXCXGXG motif repeat units lie at residues 156-163, 173-180, 199-206, and 213-220; these read CPRCGGTG, CPSCGGTG, CERCGGTG, and CHECGGSG.

It belongs to the DnaJ family. In terms of assembly, homodimer. Zn(2+) is required as a cofactor.

It localises to the cytoplasm. Functionally, participates actively in the response to hyperosmotic and heat shock by preventing the aggregation of stress-denatured proteins and by disaggregating proteins, also in an autonomous, DnaK-independent fashion. Unfolded proteins bind initially to DnaJ; upon interaction with the DnaJ-bound protein, DnaK hydrolyzes its bound ATP, resulting in the formation of a stable complex. GrpE releases ADP from DnaK; ATP binding to DnaK triggers the release of the substrate protein, thus completing the reaction cycle. Several rounds of ATP-dependent interactions between DnaJ, DnaK and GrpE are required for fully efficient folding. Also involved, together with DnaK and GrpE, in the DNA replication of plasmids through activation of initiation proteins. This Thermotoga petrophila (strain ATCC BAA-488 / DSM 13995 / JCM 10881 / RKU-1) protein is Chaperone protein DnaJ.